We begin with the raw amino-acid sequence, 553 residues long: Copine-9 (553 aa).

C2 domains are found at residues 1 to 125 and 132 to 255; these read MSLG…ERTL and KCGT…FTVY. N95 carries N-linked (GlcNAc...) asparagine glycosylation. Residues D163, D169, D225, D227, and D233 each coordinate Ca(2+). Residues 299-500 enclose the VWFA domain; it reads NFTVAIDFTA…VQFVPFRDYV (202 aa). A disordered region spans residues 531 to 553; it reads TRDIQPRPPPPANPSPIPAPEQP. The span at 536-553 shows a compositional bias: pro residues; that stretch reads PRPPPPANPSPIPAPEQP.

The protein belongs to the copine family. The cofactor is Ca(2+). Expressed in melanocytes.

Functionally, probable calcium-dependent phospholipid-binding protein that may play a role in calcium-mediated intracellular processes. Plays a role in dendrite formation by melanocytes. This chain is Copine-9, found in Homo sapiens (Human).